We begin with the raw amino-acid sequence, 129 residues long: Glycine cleavage system H protein (129 aa).

In terms of domain architecture, Lipoyl-binding spans 24–106 (LVRIGISAFA…HGEGWLLLVK (83 aa)). An N6-lipoyllysine modification is found at K65.

This sequence belongs to the GcvH family. As to quaternary structure, the glycine cleavage system is composed of four proteins: P, T, L and H. (R)-lipoate is required as a cofactor.

Functionally, the glycine cleavage system catalyzes the degradation of glycine. The H protein shuttles the methylamine group of glycine from the P protein to the T protein. This is Glycine cleavage system H protein from Prochlorococcus marinus (strain SARG / CCMP1375 / SS120).